The chain runs to 367 residues: Peptide chain release factor 2 (367 aa).

Glutamine 254 bears the N5-methylglutamine mark.

This sequence belongs to the prokaryotic/mitochondrial release factor family. Methylated by PrmC. Methylation increases the termination efficiency of RF2.

Its subcellular location is the cytoplasm. Functionally, peptide chain release factor 2 directs the termination of translation in response to the peptide chain termination codons UGA and UAA. The sequence is that of Peptide chain release factor 2 from Leptospira interrogans serogroup Icterohaemorrhagiae serovar Lai (strain 56601).